A 462-amino-acid polypeptide reads, in one-letter code: Argininosuccinate lyase (462 aa).

This sequence belongs to the lyase 1 family. Argininosuccinate lyase subfamily.

The protein resides in the cytoplasm. The enzyme catalyses 2-(N(omega)-L-arginino)succinate = fumarate + L-arginine. It functions in the pathway amino-acid biosynthesis; L-arginine biosynthesis; L-arginine from L-ornithine and carbamoyl phosphate: step 3/3. In Chloroflexus aggregans (strain MD-66 / DSM 9485), this protein is Argininosuccinate lyase.